The primary structure comprises 490 residues: Homoserine O-acetyltransferase (490 aa).

The AB hydrolase-1 domain maps to 47–355 (NAILVCHALT…DYGHDAFLLE (309 aa)). Catalysis depends on serine 152, which acts as the Nucleophile. Arginine 222 contributes to the substrate binding site. Active-site residues include aspartate 316 and histidine 349. Position 350 (aspartate 350) interacts with substrate. CBS domains are found at residues 376-436 (MKTD…LEDV) and 437-490 (MTKD…ISSY).

This sequence belongs to the AB hydrolase superfamily. MetX family. As to quaternary structure, homodimer.

It localises to the cytoplasm. It catalyses the reaction L-homoserine + acetyl-CoA = O-acetyl-L-homoserine + CoA. It functions in the pathway amino-acid biosynthesis; L-methionine biosynthesis via de novo pathway; O-acetyl-L-homoserine from L-homoserine: step 1/1. Functionally, transfers an acetyl group from acetyl-CoA to L-homoserine, forming acetyl-L-homoserine. This is Homoserine O-acetyltransferase from Methanobrevibacter ruminantium (strain ATCC 35063 / DSM 1093 / JCM 13430 / OCM 146 / M1) (Methanobacterium ruminantium).